We begin with the raw amino-acid sequence, 695 residues long: Solute carrier family 53 member 1 (695 aa).

Topologically, residues 1-228 (MKFAEHLSAH…RVPPLGAAQP (228 aa)) are cytoplasmic. The SPX domain maps to 2–224 (KFAEHLSAHI…MKRLRVPPLG (223 aa)). The tract at residues 158-165 (KILKKHDK) is important for inositol polyphosphate binding. A helical membrane pass occupies residues 229–259 (APAWTTFRVGLFCGIFIVLNITLVFAAVFKL). Residues 260 to 264 (ETDRT) are Extracellular-facing. A helical transmembrane segment spans residues 265–296 (VWPLIRIYRGGFLLIEFLFLLGINTYGWRQAG). At 297 to 309 (VNHVLIFELNPRN) the chain is on the cytoplasmic side. Residues 310 to 337 (NLSHQHLFEIAGFLGILWCLSLLACFFA) traverse the membrane as a helical segment. Over 338-343 (PISIIP) the chain is Extracellular. Residues 344–365 (IYVYPLALYGFMVFFLINPTKT) traverse the membrane as a helical segment. The helical intramembrane region spans 366–383 (FYYKSRFWLLKLLFRVFT). The Cytoplasmic segment spans residues 384–388 (APFHK). Residues 389–422 (VGFADFWLADQLNSLSVILMDLEYMICFYSFELK) traverse the membrane as a discontinuously helical segment. Positions 398 and 401 each coordinate phosphate. Topologically, residues 423–429 (WDESKGL) are extracellular. A discontinuously helical membrane pass occupies residues 430-471 (LPNDPQEPEFCHKYSYGVRAIVQCIPAWLRFIQCLRRYRDTR). Residues 439–642 (FCHKYSYGVR…LNADDQTLLE (204 aa)) form the EXS domain. Arg-472 is a topological domain (cytoplasmic). The chain crosses the membrane as a helical span at residues 473-503 (AFPHLVNAGKYSTTFFTVTFAALYSTHEEQN). Residues Lys-482 and Tyr-483 each coordinate phosphate. The Extracellular segment spans residues 504–506 (HSD). Residues 507–534 (TVVFFYLWVFFCIISSCYTLIWDLKMDW) traverse the membrane as a helical segment. Residues 535-553 (GLFDKNAGENTFLREEIVY) lie on the Cytoplasmic side of the membrane. Residues 554 to 584 (PQKAYYYCAIIEDVILRFAWTIQISITATFK) traverse the membrane as a discontinuously helical segment. Arg-570 is a phosphate binding site. At 585–586 (PH) the chain is on the extracellular side. A helical transmembrane segment spans residues 587–625 (VGNIIATVFAPLEVFRRFVWNFFRLENEHLNNCGEFRAV). Phosphate-binding residues include Arg-602 and Arg-603. Residues 626–695 (RDISVAPLNA…IEDTDDEANT (70 aa)) are Cytoplasmic-facing. At Ser-667 the chain carries Phosphoserine. The disordered stretch occupies residues 671-695 (PRLASQSKARDTKVLIEDTDDEANT). Thr-689 is modified (phosphothreonine).

This sequence belongs to the SYG1 (TC 2.A.94) family. In terms of assembly, homodimer. Expressed in pancreatic islets.

It localises to the cell membrane. It catalyses the reaction phosphate(in) = phosphate(out). Its function is as follows. Inorganic ion transporter that mediates phosphate ion export across plasma membrane. Plays a major role in phosphate homeostasis, preventing intracellular phosphate accumulation and possible calcium phosphate precipitation, ultimately preserving calcium signaling. Binds inositol hexakisphosphate (Ins6P) and similar inositol polyphosphates, such as 5-diphospho-inositol pentakisphosphate (5-InsP7), which are important intracellular signaling molecules involved in regulation of phosphate flux. Functionally, (Microbial infection) Receptor for xenotropic and polytropic murine leukemia (X- and P-MLV) retroviruses. Confers susceptibility to X- or P-MLV infection in vitro. The sequence is that of Solute carrier family 53 member 1 from Mus musculus (Mouse).